The following is a 690-amino-acid chain: Cyclic nucleotide-gated channel alpha-1 (690 aa).

Topologically, residues 1-163 (MKKVIINTWH…VVIDPSGNTY (163 aa)) are cytoplasmic. Disordered stretches follow at residues 33–76 (GACS…PSQR) and 88–151 (NVNN…EEKK). Acidic residues predominate over residues 40–54 (GDDDDSASMFEESET). A compositionally biased stretch (polar residues) spans 64-76 (RSNTHGSGQPSQR). The segment covering 111–151 (SKPDDKNENKKDPEKKKKKEKDKDKKKKEEKGKDKKEEEKK) has biased composition (basic and acidic residues). A helical membrane pass occupies residues 164–185 (YNWLFCITLPVMYNWTMIIARA). Residues 186–195 (CFDELQSDYL) lie on the Extracellular side of the membrane. The helical transmembrane segment at 196–215 (EYWLAFDYLSDVVYLLDMFV) threads the bilayer. At 216 to 241 (RTRTGYLEQGLLVKEERKLIDKYKST) the chain is on the cytoplasmic side. The helical transmembrane segment at 242–251 (FQFKLDVLSV) threads the bilayer. Residues 252-264 (IPTDLLYIKFGWN) lie on the Extracellular side of the membrane. A helical transmembrane segment spans residues 265-283 (YPEIRLNRLLRISRMFEFF). The Cytoplasmic portion of the chain corresponds to 284 to 291 (QRTETRTN). A helical transmembrane segment spans residues 292–315 (YPNIFRISNLVMYIIIIIHWNACV). Residues 293–402 (PNIFRISNLV…NIGSMISNMN (110 aa)) are ion conduction pathway. At 316–342 (YFSISKAIGFGNDTWVYPDVNDPDFGR) the chain is on the extracellular side. N-linked (GlcNAc...) asparagine glycosylation is present at N327. The next 2 helical transmembrane spans lie at 343-373 (LARK…DSEY) and 374-399 (FFVV…SMIS). Positions 360-363 (TIGE) are selectivity filter. Over 400–690 (NMNAARAEFQ…ESGPTDSTQD (291 aa)) the chain is Cytoplasmic. Residues 403-479 (AARAEFQARI…DTLKKVRIFA (77 aa)) are C-linker. The segment at 482–603 (EAGLLVELVL…EEKGKQILMK (122 aa)) is cyclic nucleotide-binding domain (CNBD). Residues G543, S546, R559, and T560 each coordinate 3',5'-cyclic GMP. 2 residues coordinate 3',5'-cyclic AMP: R559 and T560. A coiled-coil region spans residues 621 to 664 (LEEKVTRMESSVDLLQTRFARILAEYESMQQKLKQRLTKVEKFL).

The protein belongs to the cyclic nucleotide-gated cation channel (TC 1.A.1.5) family. CNGA1 subfamily. Forms a heterotetramer with CNGB1 in a 3:1 ratio. May also form cyclic nucleotide-activated homotetrameric channels, that are efficiently activated by saturating cGMP, but poorly activated by saturating cAMP compared to the heterotetramer with CNGB1. The channel binds Ca(2+)-bound CALM1 via CaM1 and CaM2 regions of the CNGB1 subunit; this interaction modulates the affinity of the channel for cNMPs in response to intracellular Ca(2+) levels. Expressed in the retina, in rod cells (at protein level).

The protein resides in the cell membrane. It carries out the reaction Ca(2+)(in) = Ca(2+)(out). It catalyses the reaction Na(+)(in) = Na(+)(out). The enzyme catalyses K(+)(in) = K(+)(out). The catalysed reaction is NH4(+)(in) = NH4(+)(out). It carries out the reaction Rb(+)(in) = Rb(+)(out). It catalyses the reaction Li(+)(in) = Li(+)(out). The enzyme catalyses Cs(+)(in) = Cs(+)(out). Functionally, pore-forming subunit of the rod cyclic nucleotide-gated channel. Mediates rod photoresponses at dim light converting transient changes in intracellular cGMP levels into electrical signals. In the dark, cGMP levels are high and keep the channel open enabling a steady inward current carried by Na(+) and Ca(2+) ions that leads to membrane depolarization and neurotransmitter release from synaptic terminals. Upon photon absorption cGMP levels decline leading to channel closure and membrane hyperpolarization that ultimately slows neurotransmitter release and signals the presence of light, the end point of the phototransduction cascade. Conducts cGMP- and cAMP-gated ion currents, with permeability for monovalent and divalent cations. The selectivity for Ca(2+) over Na(+) increases with cGMP concentrations, whereas the selectivity among monovalent ions is independent of the cGMP levels. This chain is Cyclic nucleotide-gated channel alpha-1, found in Bos taurus (Bovine).